Consider the following 308-residue polypeptide: N-acetylmuramic acid 6-phosphate etherase (308 aa).

An SIS domain is found at 59–222 (TAERLRHGGR…STGVMVKLGK (164 aa)). The active-site Proton donor is E87. E118 is an active-site residue.

The protein belongs to the GCKR-like family. MurNAc-6-P etherase subfamily. In terms of assembly, homodimer.

The catalysed reaction is N-acetyl-D-muramate 6-phosphate + H2O = N-acetyl-D-glucosamine 6-phosphate + (R)-lactate. The protein operates within amino-sugar metabolism; N-acetylmuramate degradation. Functionally, specifically catalyzes the cleavage of the D-lactyl ether substituent of MurNAc 6-phosphate, producing GlcNAc 6-phosphate and D-lactate. This chain is N-acetylmuramic acid 6-phosphate etherase, found in Nostoc punctiforme (strain ATCC 29133 / PCC 73102).